We begin with the raw amino-acid sequence, 389 residues long: Sulfate adenylyltransferase (389 aa).

Belongs to the sulfate adenylyltransferase family.

It catalyses the reaction sulfate + ATP + H(+) = adenosine 5'-phosphosulfate + diphosphate. The protein operates within sulfur metabolism; hydrogen sulfide biosynthesis; sulfite from sulfate: step 1/3. The protein is Sulfate adenylyltransferase of Microcystis aeruginosa (strain NIES-843 / IAM M-2473).